The sequence spans 239 residues: Transmembrane ascorbate ferrireductase 1 (239 aa).

The Cytoplasmic portion of the chain corresponds to 1–7; sequence MAVRINA. The chain crosses the membrane as a helical span at residues 8–28; sequence MAVTFVAHALAVIAAIMVLVW. In terms of domain architecture, Cytochrome b561 spans 13-216; that stretch reads VAHALAVIAA…FGAFVVLTAS (204 aa). Topologically, residues 29–45 are lumenal; sequence SISYRGGLAWEATNKNL. The helical transmembrane segment at 46-66 threads the bilayer; the sequence is IFNLHPVLMLIGFIILGGEAI. His50 contributes to the heme b binding site. The Cytoplasmic portion of the chain corresponds to 67–81; that stretch reads ISYKSLPLEKPVKKL. The chain crosses the membrane as a helical span at residues 82 to 102; sequence IHLILHAIALALGIFGICAAF. Positions 83 and 117 each coordinate heme b. The Lumenal portion of the chain corresponds to 103-119; sequence KNHNESHIPNLYSLHSW. Residues 120-140 traverse the membrane as a helical segment; it reads IGIGVISLYGFQWVYSFIVFF. Residues 141–155 lie on the Cytoplasmic side of the membrane; sequence FPGGSTNLKSGLLPW. His156 is a heme b binding site. Residues 156 to 176 form a helical membrane-spanning segment; it reads HAMLGLFVYILAVGNAALGFL. Over 177-193 the chain is Lumenal; sequence EKLTFLENGGLDKYGSE. A helical transmembrane segment spans residues 194-214; the sequence is AFLINFTAIITILFGAFVVLT. At 215 to 239 the chain is on the cytoplasmic side; the sequence is ASAESPSPSPSVSNDDSVDFSYSAI. Positions 217–239 are disordered; the sequence is AESPSPSPSVSNDDSVDFSYSAI. The segment covering 224 to 239 has biased composition (low complexity); it reads PSVSNDDSVDFSYSAI.

In terms of assembly, homodimer. Heme b serves as cofactor. Expressed in roots, seedlings and leaves. Lower expression in flowers. Expressed in the L1 layer of the shoot apex, in the epidermis of leaf primordia and young leaves and in vascular bundles. In the differentiation zone of the root, detected in the pericycle and in the epidermis, but not in the cortex. Strongly expressed in the lateral part of the root cap and in the epidermis of the root tip, but not in the meristematic tissue. Not expressed in lateral roots. In mature embryos, expressed in the epidermis, cotyledon tips and root tips.

Its subcellular location is the vacuole membrane. It carries out the reaction Fe(3+)(out) + L-ascorbate(in) = monodehydro-L-ascorbate radical(in) + Fe(2+)(out) + H(+). Its function is as follows. Two-heme-containing cytochrome. Catalyzes ascorbate-dependent trans-membrane ferric-chelate reduction. Able to use dihydrolipoic acid (DHLA) as an alternative substrate to ascorbate. The sequence is that of Transmembrane ascorbate ferrireductase 1 (CYB561A) from Arabidopsis thaliana (Mouse-ear cress).